A 1215-amino-acid polypeptide reads, in one-letter code: DNA-directed RNA polymerase subunit beta' (1215 aa).

4 residues coordinate Zn(2+): Cys60, Cys62, Cys75, and Cys78. Mg(2+) contacts are provided by Asp450, Asp452, and Asp454. The Zn(2+) site is built by Cys818, Cys892, Cys899, and Cys902.

It belongs to the RNA polymerase beta' chain family. As to quaternary structure, the RNAP catalytic core consists of 2 alpha, 1 beta, 1 beta' and 1 omega subunit. When a sigma factor is associated with the core the holoenzyme is formed, which can initiate transcription. It depends on Mg(2+) as a cofactor. The cofactor is Zn(2+).

The catalysed reaction is RNA(n) + a ribonucleoside 5'-triphosphate = RNA(n+1) + diphosphate. Functionally, DNA-dependent RNA polymerase catalyzes the transcription of DNA into RNA using the four ribonucleoside triphosphates as substrates. This is DNA-directed RNA polymerase subunit beta' from Streptococcus suis (strain 98HAH33).